The primary structure comprises 254 residues: rRNA N-glycosylase sapovaccarin-S2 (254 aa).

It belongs to the ribosome-inactivating protein family. Type 1 RIP subfamily. As to expression, expressed in seeds; most abundant in the perisperm.

The enzyme catalyses Endohydrolysis of the N-glycosidic bond at one specific adenosine on the 28S rRNA.. Its function is as follows. Exhibits N-glycosylase activity. Catalyzes the release of one adenine from a ribosome. Acts as a ribosome-inactivating protein and inhibits protein synthesis. Induces cell death in Huh-7 liver cells. May contribute to the protection against plant pests and predators or play a role in regulating the death of plant cells. This Gypsophila vaccaria (Cow soapwort) protein is rRNA N-glycosylase sapovaccarin-S2.